The sequence spans 117 residues: Large ribosomal subunit protein bL20c (117 aa).

This sequence belongs to the bacterial ribosomal protein bL20 family.

It is found in the plastid. Its subcellular location is the chloroplast. Its function is as follows. Binds directly to 23S ribosomal RNA and is necessary for the in vitro assembly process of the 50S ribosomal subunit. It is not involved in the protein synthesizing functions of that subunit. In Vitis vinifera (Grape), this protein is Large ribosomal subunit protein bL20c.